The primary structure comprises 67 residues: Archaeal histone HAN1 subunit A (67 aa).

2 interaction with DNA regions span residues 20 to 22 and 54 to 57; these read RVS and KTVK.

Belongs to the archaeal histone HMF family. Heterodimer. Dimers then assemble into higher oligomers, with the DNA wrapped around the protein core.

The protein localises to the cytoplasm. Its subcellular location is the chromosome. Functionally, binds and compact DNA (95 to 150 base pairs) to form nucleosome-like structures that contain positive DNA supercoils. Increases the resistance of DNA to thermal denaturation (in vitro). In Thermococcus zilligii, this protein is Archaeal histone HAN1 subunit A (han1A).